The following is a 74-amino-acid chain: MARFFRRRKYCRFTAEGVKEIDYKDLNTLRNYVTETGKIVPSRITGTSARYQRQLARAIKRARYLALLPYTDRH.

It belongs to the bacterial ribosomal protein bS18 family. As to quaternary structure, part of the 30S ribosomal subunit. Forms a tight heterodimer with protein bS6.

Functionally, binds as a heterodimer with protein bS6 to the central domain of the 16S rRNA, where it helps stabilize the platform of the 30S subunit. This chain is Small ribosomal subunit protein bS18, found in Alkalilimnicola ehrlichii (strain ATCC BAA-1101 / DSM 17681 / MLHE-1).